The following is a 543-amino-acid chain: CTP synthase (543 aa).

Residues 1-267 (MTKYVFVTGG…ATQVLNLLNL (267 aa)) are amidoligase domain. S13 lines the CTP pocket. S13 is a binding site for UTP. ATP is bound by residues 14–19 (SIGKGI) and D71. 2 residues coordinate Mg(2+): D71 and E141. Residues 148 to 150 (DIE), 188 to 193 (KTKPTQ), and K224 contribute to the CTP site. UTP-binding positions include 188 to 193 (KTKPTQ) and K224. Positions 292–534 (EVAIVGKYVR…LAAAAKNSNR (243 aa)) constitute a Glutamine amidotransferase type-1 domain. G354 contacts L-glutamine. Catalysis depends on C381, which acts as the Nucleophile; for glutamine hydrolysis. L-glutamine contacts are provided by residues 382–385 (LGMQ), E405, and R462. Catalysis depends on residues H507 and E509.

The protein belongs to the CTP synthase family. As to quaternary structure, homotetramer.

The catalysed reaction is UTP + L-glutamine + ATP + H2O = CTP + L-glutamate + ADP + phosphate + 2 H(+). It carries out the reaction L-glutamine + H2O = L-glutamate + NH4(+). It catalyses the reaction UTP + NH4(+) + ATP = CTP + ADP + phosphate + 2 H(+). Its pathway is pyrimidine metabolism; CTP biosynthesis via de novo pathway; CTP from UDP: step 2/2. Its activity is regulated as follows. Allosterically activated by GTP, when glutamine is the substrate; GTP has no effect on the reaction when ammonia is the substrate. The allosteric effector GTP functions by stabilizing the protein conformation that binds the tetrahedral intermediate(s) formed during glutamine hydrolysis. Inhibited by the product CTP, via allosteric rather than competitive inhibition. Its function is as follows. Catalyzes the ATP-dependent amination of UTP to CTP with either L-glutamine or ammonia as the source of nitrogen. Regulates intracellular CTP levels through interactions with the four ribonucleotide triphosphates. The polypeptide is CTP synthase (Thermosynechococcus vestitus (strain NIES-2133 / IAM M-273 / BP-1)).